A 433-amino-acid polypeptide reads, in one-letter code: MLDIQLLRKDLDGVAKRLADRGYTLDVAAFSALEAERRAIQTRTEELQARRNSLSKQIGAMKGKGEDTSDVMAEVGGIGDEMKASEAKLGEIQTRLSDLMLGMPNIAHESVPVGKDEADNVEVRRWGTPREFDFAVKDHVDVGTPLGLDFETGAKLAGARFTMLRGSIARLHRALAQFMIDTHTLQHGYSETYTPYIVNPEILYGTGQLPKFADDMFRVEKGGGENTITQYLISTSEISLTNTVRDSIVEGSALPIKLTAHSPCFRSEAGSYGRDTRGMIRQHQFDKVEMVQVVAPDASYAALDEMVGHAEAILQKLGLPYRVITLCTGDMGFSAAKTFDLEVWLPAQNTYREISSCSNTEAFQARRMQARFRNAQGKPELVHTLNGSGLAVGRTLVAVLENYQNADGSVTVPEALRPYMGGMERIDAPAQVS.

T235–E237 serves as a coordination point for L-serine. ATP is bound at residue R266 to E268. Residue E289 participates in L-serine binding. E353–S356 serves as a coordination point for ATP. An L-serine-binding site is contributed by S388.

The protein belongs to the class-II aminoacyl-tRNA synthetase family. Type-1 seryl-tRNA synthetase subfamily. In terms of assembly, homodimer. The tRNA molecule binds across the dimer.

It is found in the cytoplasm. The catalysed reaction is tRNA(Ser) + L-serine + ATP = L-seryl-tRNA(Ser) + AMP + diphosphate + H(+). It catalyses the reaction tRNA(Sec) + L-serine + ATP = L-seryl-tRNA(Sec) + AMP + diphosphate + H(+). It participates in aminoacyl-tRNA biosynthesis; selenocysteinyl-tRNA(Sec) biosynthesis; L-seryl-tRNA(Sec) from L-serine and tRNA(Sec): step 1/1. Its function is as follows. Catalyzes the attachment of serine to tRNA(Ser). Is also able to aminoacylate tRNA(Sec) with serine, to form the misacylated tRNA L-seryl-tRNA(Sec), which will be further converted into selenocysteinyl-tRNA(Sec). The protein is Serine--tRNA ligase of Burkholderia ambifaria (strain MC40-6).